Here is a 248-residue protein sequence, read N- to C-terminus: Mannose-binding protein C (248 aa).

The N-terminal stretch at 1–20 (MSLFPSLPLLLLSVVATSYS) is a signal peptide. In terms of domain architecture, Collagen-like spans 42-99 (GINGFPGKDGRDGTKGEKGEPGQGLRGLQGPPGKLGPPGNPGPSGSPGPKGQKGDPGE). The interval 43–111 (INGFPGKDGR…DCDSSLAASE (69 aa)) is disordered. Pro47 is subject to 4-hydroxyproline. Basic and acidic residues predominate over residues 49-61 (KDGRDGTKGEKGE). Pro73, Pro79, Pro82, and Pro88 each carry 4-hydroxyproline. A compositionally biased stretch (pro residues) spans 75–87 (KLGPPGNPGPSGS). Residues 112 to 130 (RKALQTEMAHIKKWLTFSL) adopt a coiled-coil conformation. In terms of domain architecture, C-type lectin spans 134 to 245 (VGNKFFLTNG…CSSSHLALCE (112 aa)). 2 disulfides stabilise this stretch: Cys155–Cys244 and Cys222–Cys236.

In terms of assembly, oligomeric complex of 3 or more homotrimers. Interacts with MASP1 and MASP2. Interacts with MEP1A and MEP1B and may inhibit their catalytic activity. Hydroxylation on proline residues within the sequence motif, GXPG, is most likely to be 4-hydroxy as this fits the requirement for 4-hydroxylation in vertebrates.

It localises to the secreted. In terms of biological role, calcium-dependent lectin involved in innate immune defense. Binds mannose, fucose and N-acetylglucosamine on different microorganisms and activates the lectin complement pathway. Binds to late apoptotic cells, as well as to apoptotic blebs and to necrotic cells, but not to early apoptotic cells, facilitating their uptake by macrophages. This Trachypithecus obscurus (Dusky leaf-monkey) protein is Mannose-binding protein C (MBL2).